We begin with the raw amino-acid sequence, 360 residues long: Phospho-N-acetylmuramoyl-pentapeptide-transferase (360 aa).

Transmembrane regions (helical) follow at residues 21–41 (YVTFRAILGLMTALVFCLWWG), 74–94 (MGGILILAGIFISVLLWGDLG), 97–117 (YVWVVLFVLASFGLIGFIDDY), 135–155 (ILQSLAAIIIAFYLYASADTV), 168–188 (IMPQMGAFFIVLAYFTIVGSS), 199–219 (GLAIMPTVMVAAAFALIAYLS), 236–256 (AGELVIVCTAIVGAGLGFLWF), 263–283 (VFMGDVGSLALGAALGAIAVL), 288–308 (ILLVIMGGVFVMETVSVILQV), and 338–358 (VIVRFWIISLFLVMLGLATLK).

This sequence belongs to the glycosyltransferase 4 family. MraY subfamily. Mg(2+) is required as a cofactor.

It localises to the cell inner membrane. The catalysed reaction is UDP-N-acetyl-alpha-D-muramoyl-L-alanyl-gamma-D-glutamyl-meso-2,6-diaminopimeloyl-D-alanyl-D-alanine + di-trans,octa-cis-undecaprenyl phosphate = di-trans,octa-cis-undecaprenyl diphospho-N-acetyl-alpha-D-muramoyl-L-alanyl-D-glutamyl-meso-2,6-diaminopimeloyl-D-alanyl-D-alanine + UMP. The protein operates within cell wall biogenesis; peptidoglycan biosynthesis. Its function is as follows. Catalyzes the initial step of the lipid cycle reactions in the biosynthesis of the cell wall peptidoglycan: transfers peptidoglycan precursor phospho-MurNAc-pentapeptide from UDP-MurNAc-pentapeptide onto the lipid carrier undecaprenyl phosphate, yielding undecaprenyl-pyrophosphoryl-MurNAc-pentapeptide, known as lipid I. This is Phospho-N-acetylmuramoyl-pentapeptide-transferase from Shewanella violacea (strain JCM 10179 / CIP 106290 / LMG 19151 / DSS12).